Here is a 344-residue protein sequence, read N- to C-terminus: uncharacterized protein (344 aa).

The NADP(+) site is built by K38 and Y167.

It belongs to the NAD(P)-dependent epimerase/dehydratase family. Dihydroflavonol-4-reductase subfamily.

This is an uncharacterized protein from Saccharomyces cerevisiae (strain ATCC 204508 / S288c) (Baker's yeast).